A 305-amino-acid polypeptide reads, in one-letter code: Ornithine carbamoyltransferase (305 aa).

Residues 47-50, Arg98, and 125-128 each bind carbamoyl phosphate; these read STRT and HPCQ. L-ornithine contacts are provided by residues Asn156, Asp221, and 225–226; that span reads SM. Carbamoyl phosphate contacts are provided by residues 262–263 and Arg290; that span reads CL.

The protein belongs to the aspartate/ornithine carbamoyltransferase superfamily. OTCase family.

It is found in the cytoplasm. The enzyme catalyses carbamoyl phosphate + L-ornithine = L-citrulline + phosphate + H(+). It participates in amino-acid biosynthesis; L-arginine biosynthesis; L-arginine from L-ornithine and carbamoyl phosphate: step 1/3. Functionally, reversibly catalyzes the transfer of the carbamoyl group from carbamoyl phosphate (CP) to the N(epsilon) atom of ornithine (ORN) to produce L-citrulline. The protein is Ornithine carbamoyltransferase of Methanococcus vannielii (strain ATCC 35089 / DSM 1224 / JCM 13029 / OCM 148 / SB).